The primary structure comprises 1142 residues: Melanoma-associated antigen C1 (1142 aa).

A disordered region spans residues 1 to 132 (MGDKDMPTAG…DVQSPLQNPA (132 aa)). Residues 13–42 (SLLQSSSESPQSCPEGEDSQSPLQIPQSSP) are compositionally biased toward low complexity. S63 bears the Phosphoserine mark. A compositionally biased stretch (low complexity) spans 76 to 87 (SQSPLQIPQSSP). A compositionally biased stretch (polar residues) spans 92-103 (TQSPLQNSQSSP). 2 positions are modified to phosphoserine: S207 and S382. 2 disordered regions span residues 502 to 778 (TQST…LQRP) and 791 to 893 (LQSS…SLTD). A compositionally biased stretch (polar residues) spans 614–626 (SPLQGEEFQSSLQ). Residues 627-659 (SPVSICSSSTPSSLPQSFPESSQSPPEGPVQSP) are compositionally biased toward low complexity. The segment covering 671-680 (HSQSPLQSPE) has biased composition (polar residues). Low complexity-rich tracts occupy residues 741 to 762 (QSPV…FPES) and 807 to 889 (QSPL…LESD). The 199-residue stretch at 908–1106 (LDEKVDELAR…ITFPSSYKDA (199 aa)) folds into the MAGE domain. The residue at position 1063 (S1063) is a Phosphoserine. Residues 1118-1142 (IDTTDDSTATESASSSVMSPSFSSE) are disordered. The segment covering 1123–1142 (DSTATESASSSVMSPSFSSE) has biased composition (low complexity).

As to expression, expressed in testis and in tumors of a wide variety of histologic types.

The protein localises to the cytoplasm. In Homo sapiens (Human), this protein is Melanoma-associated antigen C1 (MAGEC1).